Consider the following 158-residue polypeptide: NKG2-F type II integral membrane protein (158 aa).

The segment covering 1–12 (MNKQRGTYSEVS) has biased composition (polar residues). The tract at residues 1 to 25 (MNKQRGTYSEVSLAQDPKRQQRKLK) is disordered. The Cytoplasmic portion of the chain corresponds to 1–74 (MNKQRGTYSE…LPPPEKLTAE (74 aa)). The chain crosses the membrane as a helical; Signal-anchor for type II membrane protein span at residues 75 to 95 (VLGIICIVLMATVLKTIVLIP). Over 96–158 (CIGVLEQNNF…VLRRTLICFL (63 aa)) the chain is Extracellular.

Can form disulfide-bonded heterodimer with CD94. In terms of tissue distribution, natural killer cells.

The protein resides in the membrane. In terms of biological role, may play a role as a receptor for the recognition of MHC class I HLA-E molecules by NK cells. This Homo sapiens (Human) protein is NKG2-F type II integral membrane protein (KLRC4).